A 429-amino-acid polypeptide reads, in one-letter code: Ribosomal RNA small subunit methyltransferase B (429 aa).

Residues 254–260 (CAAPGGK), Asp-277, Asp-303, and Asp-322 each bind S-adenosyl-L-methionine. The Nucleophile role is filled by Cys-375.

This sequence belongs to the class I-like SAM-binding methyltransferase superfamily. RsmB/NOP family.

The protein resides in the cytoplasm. It catalyses the reaction cytidine(967) in 16S rRNA + S-adenosyl-L-methionine = 5-methylcytidine(967) in 16S rRNA + S-adenosyl-L-homocysteine + H(+). Specifically methylates the cytosine at position 967 (m5C967) of 16S rRNA. This chain is Ribosomal RNA small subunit methyltransferase B, found in Escherichia coli (strain SE11).